A 108-amino-acid polypeptide reads, in one-letter code: uncharacterized protein (108 aa).

An N-terminal signal peptide occupies residues 1-22; the sequence is MMIKQCVICLSLLVFGTTAAHA.

This is an uncharacterized protein from Bacillus subtilis (strain 168).